The primary structure comprises 302 residues: Glycine N-acyltransferase-like protein 1 (302 aa).

The protein belongs to the glycine N-acyltransferase family. As to expression, expressed in liver and kidney and, at lower levels, in pancreas, testis, ovary and stomach.

It carries out the reaction an acyl-CoA + L-glutamine = an N(2)-acyl-L-glutamine + CoA + H(+). Its function is as follows. Acyltransferase which transfers an acyl group to the N-terminus of glutamine. Can use phenylacetyl-CoA as an acyl donor. This chain is Glycine N-acyltransferase-like protein 1, found in Homo sapiens (Human).